The chain runs to 215 residues: 3,4-dihydroxy-2-butanone 4-phosphate synthase (215 aa).

D-ribulose 5-phosphate is bound by residues 37-38, D42, 150-154, and E174; these read RE and RPGHT. E38 lines the Mg(2+) pocket. Residue H153 participates in Mg(2+) binding.

Belongs to the DHBP synthase family. In terms of assembly, homodimer. It depends on Mg(2+) as a cofactor. The cofactor is Mn(2+).

The catalysed reaction is D-ribulose 5-phosphate = (2S)-2-hydroxy-3-oxobutyl phosphate + formate + H(+). It participates in cofactor biosynthesis; riboflavin biosynthesis; 2-hydroxy-3-oxobutyl phosphate from D-ribulose 5-phosphate: step 1/1. Catalyzes the conversion of D-ribulose 5-phosphate to formate and 3,4-dihydroxy-2-butanone 4-phosphate. The chain is 3,4-dihydroxy-2-butanone 4-phosphate synthase from Buchnera aphidicola subsp. Acyrthosiphon pisum (strain 5A).